We begin with the raw amino-acid sequence, 1223 residues long: ATP-dependent DNA helicase P143 (1223 aa).

Positions 692–701 (RKCRCVQKIK) match the Nuclear localization signal motif. 919-926 (GVPLSGKS) serves as a coordination point for ATP. The H-T-H motif DNA-binding region spans 967-981 (TINELKKCSESFFKK).

It is found in the host nucleus. It carries out the reaction ATP + H2O = ADP + phosphate + H(+). In terms of biological role, essential for the initiation of viral DNA replication, it may contribute to other functions such as controlling the switch to the late phase and leading to the inhibition of host protein synthesis. Required for late and very late gene expression. The protein is ATP-dependent DNA helicase P143 (P143) of Orgyia pseudotsugata multicapsid polyhedrosis virus (OpMNPV).